Consider the following 95-residue polypeptide: Aspartyl/glutamyl-tRNA(Asn/Gln) amidotransferase subunit C (95 aa).

The protein belongs to the GatC family. As to quaternary structure, heterotrimer of A, B and C subunits.

It catalyses the reaction L-glutamyl-tRNA(Gln) + L-glutamine + ATP + H2O = L-glutaminyl-tRNA(Gln) + L-glutamate + ADP + phosphate + H(+). The enzyme catalyses L-aspartyl-tRNA(Asn) + L-glutamine + ATP + H2O = L-asparaginyl-tRNA(Asn) + L-glutamate + ADP + phosphate + 2 H(+). In terms of biological role, allows the formation of correctly charged Asn-tRNA(Asn) or Gln-tRNA(Gln) through the transamidation of misacylated Asp-tRNA(Asn) or Glu-tRNA(Gln) in organisms which lack either or both of asparaginyl-tRNA or glutaminyl-tRNA synthetases. The reaction takes place in the presence of glutamine and ATP through an activated phospho-Asp-tRNA(Asn) or phospho-Glu-tRNA(Gln). The sequence is that of Aspartyl/glutamyl-tRNA(Asn/Gln) amidotransferase subunit C from Azoarcus sp. (strain BH72).